Here is a 354-residue protein sequence, read N- to C-terminus: Inactive ADP-ribosyltransferase ARH2 (354 aa).

Residue serine 27 is modified to Phosphoserine.

It belongs to the ADP-ribosylglycohydrolase family.

It is found in the cytoplasm. The protein resides in the myofibril. The protein localises to the sarcomere. Its function is as follows. Required for myofibril assembly and outgrowth of the cardiac chambers in the developing heart. Appears to be catalytically inactive, showing no activity against O-acetyl-ADP-ribose. In Pongo abelii (Sumatran orangutan), this protein is Inactive ADP-ribosyltransferase ARH2 (ADPRHL1).